Consider the following 294-residue polypeptide: Metallophosphoesterase MPPED2 (294 aa).

The Mn(2+) site is built by D65, H67, D86, N117, and H213. Residue 117-118 coordinates GMP; that stretch reads NH. GMP contacts are provided by residues 225-226 and 254-255; these read KE and HE. H254 contributes to the Mn(2+) binding site.

This sequence belongs to the UPF0046 family. In terms of assembly, homodimer. Requires Mn(2+) as cofactor. Co(2+) is required as a cofactor. In terms of tissue distribution, expressed in fetal brain (at protein level). detected in fetal and adult brain.

Inhibited by nmolar levels of AMP and GMP. Its function is as follows. Displays low metallophosphoesterase activity (in vitro). May play a role in the development of the nervous system. The protein is Metallophosphoesterase MPPED2 (Mpped2) of Rattus norvegicus (Rat).